Reading from the N-terminus, the 174-residue chain is ATP synthase subunit d, mitochondrial (174 aa).

At S2 the chain carries N-acetylserine.

Belongs to the ATPase d subunit family.

It is found in the mitochondrion inner membrane. Mitochondrial membrane ATP synthase (F(1)F(0) ATP synthase or Complex V) produces ATP from ADP in the presence of a proton gradient across the membrane which is generated by electron transport complexes of the respiratory chain. F-type ATPases consist of two structural domains, F(1) - containing the extramembraneous catalytic core, and F(0) - containing the membrane proton channel, linked together by a central stalk and a peripheral stalk. During catalysis, ATP synthesis in the catalytic domain of F(1) is coupled via a rotary mechanism of the central stalk subunits to proton translocation. Part of the complex F(0) domain and the peripheric stalk, which acts as a stator to hold the catalytic alpha(3)beta(3) subcomplex and subunit a/ATP6 static relative to the rotary elements. The sequence is that of ATP synthase subunit d, mitochondrial (ATP7) from Kluyveromyces lactis (strain ATCC 8585 / CBS 2359 / DSM 70799 / NBRC 1267 / NRRL Y-1140 / WM37) (Yeast).